Consider the following 445-residue polypeptide: Scarecrow-like protein 18 (445 aa).

Residues 1–21 are compositionally biased toward low complexity; that stretch reads MLTSFKSSSSSSEDATATTTE. The segment at 1 to 26 is disordered; the sequence is MLTSFKSSSSSSEDATATTTENPPPL. The region spanning 32–445 is the GRAS domain; it reads SAATSASHHL…RPLFSVSSWK (414 aa). Residues 39 to 127 form a leucine repeat I (LRI) region; that stretch reads HHLRRLLFTA…STVFTSSVCK (89 aa). Residues 146-217 form a VHIID region; sequence YLWLNQLTPF…SPPPSLRITG (72 aa). The VHIID signature appears at 179-183; sequence LHILD. The interval 227 to 259 is leucine repeat II (LRII); sequence RTGDRLTRFADSLGLQFQFHTLVIVEEDLAGLL. The PFYRE stretch occupies residues 275–366; sequence IAVNCVHFLH…QRWFGKEILD (92 aa). The interval 369 to 445 is SAW; that stretch reads AAEETERKQR…RPLFSVSSWK (77 aa).

It belongs to the GRAS family. As to expression, expressed in roots and flowers.

It localises to the nucleus. In terms of biological role, probable transcription factor required for axillary (lateral) shoot meristem formation during vegetative development. Seems to act upstream of REVOLUTA. This is Scarecrow-like protein 18 (SCL18) from Arabidopsis thaliana (Mouse-ear cress).